The sequence spans 266 residues: uncharacterized protein (266 aa).

A helical membrane pass occupies residues 13–33 (IIGLMLIIFAGILFYAYILQH).

It belongs to the LicD transferase family.

Its subcellular location is the membrane. This is an uncharacterized protein from Rickettsia prowazekii (strain Madrid E).